We begin with the raw amino-acid sequence, 457 residues long: Histidine--tRNA ligase (457 aa).

Belongs to the class-II aminoacyl-tRNA synthetase family. Homodimer.

It is found in the cytoplasm. It carries out the reaction tRNA(His) + L-histidine + ATP = L-histidyl-tRNA(His) + AMP + diphosphate + H(+). The sequence is that of Histidine--tRNA ligase from Mesoplasma florum (strain ATCC 33453 / NBRC 100688 / NCTC 11704 / L1) (Acholeplasma florum).